Consider the following 751-residue polypeptide: Conserved oligomeric Golgi complex subunit 5 (751 aa).

Disordered regions lie at residues 1–21 and 244–263; these read MVTG…DDND and SPTH…KTPQ.

This sequence belongs to the COG5 family. Component of the conserved oligomeric Golgi complex which is composed of eight different subunits and is required for normal Golgi morphology and localization.

It is found in the golgi apparatus membrane. Its function is as follows. Required for normal Golgi function and necessary during spermatogenesis. Required for cleavage furrow ingression during cytokinesis in dividing spermatocytes and for the extensive polarized cell growth that accompanies spermatid elongation. The sequence is that of Conserved oligomeric Golgi complex subunit 5 (fws) from Drosophila melanogaster (Fruit fly).